The chain runs to 428 residues: Synaptotagmin-1 (428 aa).

Over 1-67 the chain is Vesicular; it reads MDSLLARVKR…KDKLINEIEN (67 aa). Positions 16–50 are disordered; the sequence is ALNPAQEGVTGGPDAAGLPDVSTSSPGGGGAGDKL. A helical membrane pass occupies residues 68–92; that stretch reads LPIWAIVLIIAGSLLFLVCCVYCVC. The Cytoplasmic portion of the chain corresponds to 93-428; that stretch reads RRSCRKRKKK…HTLQEVPEKN (336 aa). A Phosphoserine; by PRKC2 modification is found at S123. Residues 147 to 395 are phospholipid binding; that stretch reads STKSEVKLGK…PIGRCVLGCN (249 aa). 2 C2 domains span residues 153 to 272 and 286 to 419; these read KLGK…EDWK and KLGD…AQWH. Ca(2+)-binding residues include D184, D190, D242, F243, D244, S247, K248, D250, D317, D323, D377, and D379.

The protein belongs to the synaptotagmin family. In terms of assembly, binds SNAP25. Isoform 3 binds SNAP25 with higher affinity. The cofactor is Ca(2+).

The protein resides in the cytoplasmic vesicle. It localises to the secretory vesicle. It is found in the synaptic vesicle membrane. Its subcellular location is the synapse. Functionally, acts as inhibitor of neurotransmitter release. Overexpression leads to a decrease in the amplitude of the excitatory postsynaptic potential in dissected cholinergic and glutaminergic neurons while depletion with antisense oligonucleotides leads to an increase. Overexpression of isoform 1 blocks the reversal of synaptic depression by serotonin in sensory neurons. This chain is Synaptotagmin-1 (SYT1), found in Aplysia californica (California sea hare).